The chain runs to 94 residues: ESAT-6-like protein EsxI (94 aa).

The protein belongs to the WXG100 family. ESAT-6 subfamily.

It is found in the secreted. The polypeptide is ESAT-6-like protein EsxI (Mycobacterium tuberculosis (strain CDC 1551 / Oshkosh)).